Consider the following 880-residue polypeptide: MANLPKSSVNYPGTLTPLEPNRPSPQPDRTPVPHSPPVVASPIPPRFPQPSFRPDQMSSPSMKSPSLLSPANGIRTGSPIPRLSTPPGPPVFNTPVKPAAVPFRTSPATPQPMAYSSANSSLPVSTPSFYSNGSSVGSQRDLPDVVRMEEPIAADSPYVLFSANKVLKQKKLANVASLGFGAIVSAGREISPGPQIIQRDPHRCLNCGAYSNPYSSILIGSGQWQCVICENMNGSKGEYVASSKNELQNFPELSLPLVDYVQTGNKRPGFVPASDSRTSAPVVLVIDECLDEPHLQHLQSSLHAFVDSLPQTTRLGIILYGRTVSIYDFSEDSVASADVISGAKSPSAESMKALIYGTGVYLSPMHASLKVAHEIFSSLRPYTLNVPEASRDRCLGTAVEAALAIIQGPSAEMSRGVVRRAGGNSRIIVCAGGPITYGPGSVPHSMSHPNYPYMEKTAIKWMENLGREAHRHNTVVDILCAGTCPLRVPILQPLAKASGGVLVLHDDFGEAFGVDLQRAATRAAGSHGLLEVRCSDDILITQVIGPGEEAHSETHETFKSDAALSIQMLSVEETQSFSLSMENKRDIKSDHVFFQFAFHYSDVYQADVSRVITFKLPTVDSISAYLQSVEDEASAVLISKRTLLLAKNQKDAVDMRATVDERIKDIALKFGSQVPKSKLYSFPKELSSLPELLFHLRRGPLLGNIIGHEDERSVLRNLFLNASFDLSLRMVAPRCLMHQEGGTFEELPAYDLSMQSDKAVILDHGTDVFIWLGAELSADEVKSAAVLAACRTLAEELTEFRFPAPRILAFKEGSSQARYFVCRLIPAHKDPPYEQEARFPQIRTLTTEQRMKLKSSFIEFDEASFCEWMRSLKVVPPEPR.

Residues 1–13 (MANLPKSSVNYPG) are compositionally biased toward polar residues. Residues 1 to 95 (MANLPKSSVN…PPGPPVFNTP (95 aa)) are disordered. A compositionally biased stretch (pro residues) spans 20–36 (PNRPSPQPDRTPVPHSP). Residues 57–70 (MSSPSMKSPSLLSP) show a composition bias toward low complexity. Cys204, Cys207, Cys226, and Cys229 together coordinate Zn(2+). Positions 204-229 (CLNCGAYSNPYSSILIGSGQWQCVIC) are zinc finger-like.

It belongs to the SEC23/SEC24 family. SEC24 subfamily. Component of the coat protein complex II (COPII), composed of at least five proteins: the Sec23/24 complex, the Sec13/31 complex and Sar1. In terms of tissue distribution, mostly expressed in seedlings, roots, cotyledons, leaves, trichomes, leaf primordia and flowers, and, to a lower extent, in mature siliques.

The protein localises to the cytoplasmic vesicle. It is found in the COPII-coated vesicle membrane. It localises to the endoplasmic reticulum membrane. The protein resides in the membrane. Functionally, component of the coat protein complex II (COPII) which promotes the formation of transport vesicles from the endoplasmic reticulum (ER). The coat has two main functions, the physical deformation of the endoplasmic reticulum membrane into vesicles and the selection of cargo molecules. May contribute to COPII-coated vesicles formation and ER-Golgi vesicle transport. Together with SEC23D, essential for pollen wall development and exine patterning, probably by regulating endoplasmic reticulum (ER) export of lipids and proteins (e.g. sporopollenin) necessary for pollen wall formation. Also involved in plastid physiology in anther tapetal cells. In Arabidopsis thaliana (Mouse-ear cress), this protein is Protein transport protein SEC23 A.